Here is a 764-residue protein sequence, read N- to C-terminus: Chloride anion exchanger (764 aa).

The Cytoplasmic portion of the chain corresponds to 1-76 (MIEPFGNQYI…YRLKEWLLSD (76 aa)). A helical membrane pass occupies residues 77–97 (IVSGISTGIVAVLQGLAFALL). At 98–99 (VD) the chain is on the extracellular side. Residues 100-120 (IPPVYGLYASFFPAIIYLFFG) traverse the membrane as a helical segment. At 121–124 (TSRH) the chain is on the cytoplasmic side. Residues 125-145 (ISVGPFPILSMMVGLAVSGAV) form a helical membrane-spanning segment. Residues 146–175 (SKAVPDRNATTLGLPNNSNNSSLLDDERVR) lie on the Extracellular side of the membrane. N-linked (GlcNAc...) asparagine glycans are attached at residues N153, N161, and N165. A helical membrane pass occupies residues 176–196 (VAAAASVTVLSGIIQLAFGIL). R197 is a topological domain (cytoplasmic). A helical transmembrane segment spans residues 198–218 (IGFVVIYLSESLISGFTTAAA). Residues 219-257 (VHVLVSQLKFIFQLTVPSHTDPVSIFKVLYSVFSQIEKT) are Extracellular-facing. A helical membrane pass occupies residues 258-278 (NIADLVTALIVLLVVSIVKEI). Residues 279 to 342 (NQRFKDKLPV…VETFQNTVGD (64 aa)) lie on the Cytoplasmic side of the membrane. A helical membrane pass occupies residues 343–363 (CFGIAMVAFAVAFSVASVYSL). At 364-374 (KYDYPLDGNQE) the chain is on the extracellular side. Residues 375-395 (LIALGLGNIVCGVFRGFAGST) form a helical membrane-spanning segment. Over 396–411 (ALSRSAVQESTGGKTQ) the chain is Cytoplasmic. The chain crosses the membrane as a helical span at residues 412-432 (IAGLIGAIIVLIVVLAIGFLL). The Extracellular segment spans residues 433-469 (APLQKSVLAALALGNLKGMLMQFAEIGRLWRKDKYDC). The helical transmembrane segment at 470–490 (LIWIMTFIFTIVLGLGLGLAA) threads the bilayer. Topologically, residues 491–701 (SVAFQLLTIV…EKLNRYEFFD (211 aa)) are cytoplasmic. The 196-residue stretch at 525-720 (DYYDMYEPEG…LTIHDAVLHI (196 aa)) folds into the STAS domain. The PDZ-binding signature appears at 761-764 (ETKF).

Belongs to the SLC26A/SulP transporter (TC 2.A.53) family. As to quaternary structure, interacts with CFTR, SLC26A6 and NHERF1. Interacts with PDZK1. Interacts (via PDZ-binding motif) with NHERF4 (via the third PDZ domain); interaction leads to decreased expression of SLC26A3 on the cell membrane resulting in its reduced exchanger activity. In terms of processing, N-glycosylation is required for efficient cell surface expression, and protection from proteolytic degradation. As to expression, expressed in the colon. Expression is significantly decreased in adenomas (polyps) and adenocarcinomas of the colon.

It localises to the apical cell membrane. It is found in the membrane. The protein localises to the cell membrane. The catalysed reaction is hydrogencarbonate(in) + 2 chloride(out) = hydrogencarbonate(out) + 2 chloride(in). Its activity is regulated as follows. Inhibited by acidic pH. Its function is as follows. Mediates chloride-bicarbonate exchange with a chloride bicarbonate stoichiometry of 2:1 in the intestinal epithelia. Plays a role in the chloride and bicarbonate homeostasis during sperm epididymal maturation and capacitation. The protein is Chloride anion exchanger (SLC26A3) of Homo sapiens (Human).